We begin with the raw amino-acid sequence, 48 residues long: Large ribosomal subunit protein bL32 (48 aa).

Residues 24–48 (LPMPIKDKDGSYKMPHRVNPVTKEY) form a disordered region.

It belongs to the bacterial ribosomal protein bL32 family.

The sequence is that of Large ribosomal subunit protein bL32 from Campylobacter lari (strain RM2100 / D67 / ATCC BAA-1060).